Reading from the N-terminus, the 113-residue chain is DNA-directed RNA polymerase subunit omega (113 aa).

It belongs to the RNA polymerase subunit omega family. As to quaternary structure, the RNAP catalytic core consists of 2 alpha, 1 beta, 1 beta' and 1 omega subunit. When a sigma factor is associated with the core the holoenzyme is formed, which can initiate transcription.

The enzyme catalyses RNA(n) + a ribonucleoside 5'-triphosphate = RNA(n+1) + diphosphate. Promotes RNA polymerase assembly. Latches the N- and C-terminal regions of the beta' subunit thereby facilitating its interaction with the beta and alpha subunits. This Rhizorhabdus wittichii (strain DSM 6014 / CCUG 31198 / JCM 15750 / NBRC 105917 / EY 4224 / RW1) (Sphingomonas wittichii) protein is DNA-directed RNA polymerase subunit omega.